Here is a 607-residue protein sequence, read N- to C-terminus: Autophagy-related protein 22-2 (607 aa).

The disordered stretch occupies residues 1–29; sequence MTVAPPSPNSPAAELQQRPPRYPGEDTTP. The helical transmembrane segment at 41 to 61 threads the bilayer; it reads YGIAAEVFAVCGVGSFLPLTL. Residue N89 is glycosylated (N-linked (GlcNAc...) asparagine). Transmembrane regions (helical) follow at residues 119-139, 151-170, and 188-208; these read SFAMYTFSLAVLVQALTLISF, TLLLAFGFIGSATSMLFVFI, and CLGSSFVVLNSFLPVLVANDP. Residues 235–263 form a disordered region; that stretch reads SFSASDAESGPHPAAEAGSGTSSGPASPE. The segment covering 247-263 has biased composition (low complexity); sequence PAAEAGSGTSSGPASPE. 4 helical membrane-spanning segments follow: residues 274-294, 307-327, 379-399, and 415-435; these read GVGLGYCAAVLVQILSISLLF, TLPLRFVLLLVGIWWFSFTMV, VLVFLAAWFLLSDAMATVSGT, and VGLLSITATLSGMAGAFLWPV. N-linked (GlcNAc...) asparagine glycosylation occurs at N445. 4 helical membrane passes run 450 to 470, 485 to 507, 519 to 541, and 550 to 570; these read LCIALFEIIPLYGMLAYIPVF, FPLAIVHGVVSGGLSSYCRSFFG, YALYAATDKGSSVIGPAIVGMLI, and GFFFIAPLILMPIPLIWIVNA. The tract at residues 586–607 is disordered; it reads KGHETEMSEQTEEAEGLLARGI.

Belongs to the ATG22 family.

The protein resides in the vacuole membrane. Its function is as follows. Vacuolar effluxer which mediate the efflux of amino acids resulting from autophagic degradation. The release of autophagic amino acids allows the maintenance of protein synthesis and viability during nitrogen starvation. The polypeptide is Autophagy-related protein 22-2 (atg22-2) (Aspergillus oryzae (strain ATCC 42149 / RIB 40) (Yellow koji mold)).